A 575-amino-acid polypeptide reads, in one-letter code: Putative diflavin flavoprotein A 4 (575 aa).

The interval 41–234 is zinc metallo-hydrolase; sequence QRGTTANSYL…LGARSYAPGH (194 aa). Residues 263–405 enclose the Flavodoxin-like domain; it reads VALLYTSAYG…AGATFAQTLK (143 aa). Residues 429-575 form a flavodoxin-reductase-like region; that stretch reads VGRIIGSLCV…AVEHRKSGSH (147 aa).

The protein in the N-terminal section; belongs to the zinc metallo-hydrolase group 3 family. In the C-terminal section; belongs to the flavodoxin reductase family. The cofactor is Fe cation.

In terms of biological role, mediates electron transfer from NADH to oxygen, reducing it to water. This modular protein has 3 redox cofactors, in other organisms the same activity requires 2 or 3 proteins. This chain is Putative diflavin flavoprotein A 4 (dfa4), found in Nostoc sp. (strain PCC 7120 / SAG 25.82 / UTEX 2576).